The primary structure comprises 126 residues: Phosphoribosyl-AMP cyclohydrolase (126 aa).

Aspartate 74 contacts Mg(2+). Position 75 (cysteine 75) interacts with Zn(2+). Aspartate 76 and aspartate 78 together coordinate Mg(2+). Zn(2+) contacts are provided by cysteine 92 and cysteine 99.

Belongs to the PRA-CH family. As to quaternary structure, homodimer. It depends on Mg(2+) as a cofactor. Zn(2+) serves as cofactor.

It is found in the cytoplasm. It carries out the reaction 1-(5-phospho-beta-D-ribosyl)-5'-AMP + H2O = 1-(5-phospho-beta-D-ribosyl)-5-[(5-phospho-beta-D-ribosylamino)methylideneamino]imidazole-4-carboxamide. Its pathway is amino-acid biosynthesis; L-histidine biosynthesis; L-histidine from 5-phospho-alpha-D-ribose 1-diphosphate: step 3/9. In terms of biological role, catalyzes the hydrolysis of the adenine ring of phosphoribosyl-AMP. This is Phosphoribosyl-AMP cyclohydrolase from Geotalea daltonii (strain DSM 22248 / JCM 15807 / FRC-32) (Geobacter daltonii).